A 519-amino-acid chain; its full sequence is DNA damage-binding protein CMR1 (519 aa).

A disordered region spans residues 35–92; that stretch reads AEAGLGPTGKSRAAASSKPRVKKPAPKKIKQEDIAPRRTSSRLKGIEADSEKAKRKAE. Over residues 53 to 62 the composition is skewed to basic residues; that stretch reads PRVKKPAPKK. Residues 78–92 are compositionally biased toward basic and acidic residues; sequence KGIEADSEKAKRKAE. 6 WD repeats span residues 240 to 280, 287 to 327, 331 to 371, 380 to 420, 442 to 485, and 488 to 519; these read PHTR…AVEV, NEDQ…DQAE, LSEK…GKGD, EHES…EWAT, GRWV…LAQL, and DGIT…CLWM.

The protein belongs to the WD repeat DDB2/WDR76 family.

In terms of biological role, DNA-binding protein that binds to both single- and double-stranded DNA. Binds preferentially to UV-damaged DNA. May be involved in DNA-metabolic processes. The chain is DNA damage-binding protein CMR1 from Phaeosphaeria nodorum (strain SN15 / ATCC MYA-4574 / FGSC 10173) (Glume blotch fungus).